Reading from the N-terminus, the 802-residue chain is Leucine--tRNA ligase (802 aa).

The short motif at 40–51 (PYPSGAGLHVGH) is the 'HIGH' region element. Positions 576–580 (KMSKS) match the 'KMSKS' region motif. K579 contributes to the ATP binding site.

The protein belongs to the class-I aminoacyl-tRNA synthetase family.

The protein resides in the cytoplasm. It catalyses the reaction tRNA(Leu) + L-leucine + ATP = L-leucyl-tRNA(Leu) + AMP + diphosphate. The sequence is that of Leucine--tRNA ligase from Bacillus anthracis (strain A0248).